The primary structure comprises 534 residues: Steroid hormone receptor family member cnr14 (534 aa).

Disordered stretches follow at residues 30–53 (SGKTASIPSSEASKPEGTNGQWSH) and 119–139 (PATSVTSSLSPPDSLSNGHTT). Low complexity predominate over residues 119-130 (PATSVTSSLSPP). Residues 148-223 (ISFCKVCGDK…SGMSKDSVRQ (76 aa)) constitute a DNA-binding region (nuclear receptor). 2 consecutive NR C4-type zinc fingers follow at residues 151–171 (CKVCGDKASGYHYGVTSCEGC) and 187–211 (CLKQQVCEIKRESRNRCQYCRFKKC). In terms of domain architecture, NR LBD spans 252 to 493 (EVDAVYEAVL…PPLVVEMFQL (242 aa)). The segment at 502 to 534 (HNNQENQYTPAPEHQSPQPQQPTPNQQQTPVHC) is disordered. The segment covering 511 to 534 (PAPEHQSPQPQQPTPNQQQTPVHC) has biased composition (low complexity).

Belongs to the nuclear hormone receptor family. NR1 subfamily. As to expression, most abundant in embryos.

It is found in the nucleus. Transcriptional regulator which is involved in the sex determination and X chromosome dosage compensation pathways. Directly binds to five 5'-A(G/C)(G/T)(T/G)C(A/G)-3' sites in the promoter of sex-determining factor xol-1 to negatively regulate its expression and promote hermaphrodite development. Together with fox-1 is involved in making the distinction between one and two X-chromosomes. Plays a role in the fox-1-mediated repression of the functionally active isoform (isoform b) of the sex-determining factor xol-1 gene to promote hermaphrodite development. Plays a role in the association of the dosage compensation complex proteins dpy-27 and sdc-3 with the hermaphrodite X chromosomes. This Caenorhabditis elegans protein is Steroid hormone receptor family member cnr14.